A 352-amino-acid chain; its full sequence is Histidinol-phosphate aminotransferase 1 (352 aa).

N6-(pyridoxal phosphate)lysine is present on Lys-211.

Belongs to the class-II pyridoxal-phosphate-dependent aminotransferase family. Histidinol-phosphate aminotransferase subfamily. As to quaternary structure, homodimer. Requires pyridoxal 5'-phosphate as cofactor.

The enzyme catalyses L-histidinol phosphate + 2-oxoglutarate = 3-(imidazol-4-yl)-2-oxopropyl phosphate + L-glutamate. It functions in the pathway amino-acid biosynthesis; L-histidine biosynthesis; L-histidine from 5-phospho-alpha-D-ribose 1-diphosphate: step 7/9. In Haemophilus influenzae (strain 86-028NP), this protein is Histidinol-phosphate aminotransferase 1.